We begin with the raw amino-acid sequence, 364 residues long: MTHQFPPLTTEQKKELHEIALRIVSPGKGILAADESIGSMGKRLNQIGVENNEENRRLFRQVLFTADDRIDNCIGGVIFFHETLYQNSDDGVPFVKMIKDKGITIGIKVDKGVVPLPGTNGETATQGLDGLSERCAQYKKDGADFAKWRCVMKISETTPSNLCITENAKVLARYASICQQHGIVPIVEPEILPDGDHNLKRCQFVTERVLAAVYKAMFDHHVYLEGTLLKPNMVTPGHGCPTKYSAEEVAMATVTALRRTVPPAVTGVTFLSGGQSEEEASINLSAINNCRLVKPWALTFSFGRALQASALKTWRGQRENEAAATEEFIKRAEINSLASQGKYTVCGDSSGATGLSHYLSSYAY.

Residues Arg-56 and Lys-147 each coordinate substrate. The active-site Proton acceptor is the Glu-188. Lys-230 functions as the Schiff-base intermediate with dihydroxyacetone-P in the catalytic mechanism.

Belongs to the class I fructose-bisphosphate aldolase family. Homotetramer. As to expression, expressed specifically in Purkinje cells in the brain.

It carries out the reaction beta-D-fructose 1,6-bisphosphate = D-glyceraldehyde 3-phosphate + dihydroxyacetone phosphate. Its pathway is carbohydrate degradation; glycolysis; D-glyceraldehyde 3-phosphate and glycerone phosphate from D-glucose: step 4/4. The sequence is that of Fructose-bisphosphate aldolase C-A from Danio rerio (Zebrafish).